Consider the following 58-residue polypeptide: MVPVTLYVDIDLEEYIKSYGFVGPLSAKSDLKETARQVVEFELARAGFKAKVHLRKPV.

This is Gene 72 protein (72) from Mycobacterium phage L5 (Mycobacteriophage L5).